The primary structure comprises 330 residues: DNA primase small subunit PriS (330 aa).

Catalysis depends on residues D101 and D103. 4 residues coordinate Zn(2+): C116, C119, C128, and D131. The active site involves D235.

This sequence belongs to the eukaryotic-type primase small subunit family. In terms of assembly, heterodimer of a small subunit (PriS) and a large subunit (PriL). Mg(2+) serves as cofactor. Mn(2+) is required as a cofactor.

Its function is as follows. Catalytic subunit of DNA primase, an RNA polymerase that catalyzes the synthesis of short RNA molecules used as primers for DNA polymerase during DNA replication. The small subunit contains the primase catalytic core and has DNA synthesis activity on its own. Binding to the large subunit stabilizes and modulates the activity, increasing the rate of DNA synthesis while decreasing the length of the DNA fragments, and conferring RNA synthesis capability. The DNA polymerase activity may enable DNA primase to also catalyze primer extension after primer synthesis. May also play a role in DNA repair. The chain is DNA primase small subunit PriS from Saccharolobus islandicus (strain M.16.27) (Sulfolobus islandicus).